The primary structure comprises 951 residues: Protocadherin-20 (951 aa).

The signal sequence occupies residues 1–60 (MRGRGNARSSQALGVSWCPATWHPRLDMGRLHRPRSSTSYRNLPHLFLFFLFVGPFSCLG). Topologically, residues 61–890 (SYSRATELLY…VESVSCMPTL (830 aa)) are extracellular. Cadherin domains follow at residues 64 to 209 (RATE…APQF), 210 to 320 (PVSQ…CPLF), 321 to 535 (TDSQ…APIF), 536 to 639 (LQPL…SPRF), 640 to 742 (INKD…PPLV), and 746 to 863 (QSNM…EPEI). Asn135 is a glycosylation site (N-linked (GlcNAc...) asparagine). 2 N-linked (GlcNAc...) asparagine glycosylation sites follow: Asn326 and Asn332. N-linked (GlcNAc...) asparagine glycans are attached at residues Asn680, Asn748, Asn803, Asn844, and Asn849. The chain crosses the membrane as a helical span at residues 891-911 (VALSVISLGSITLVTGMGIYI). The Cytoplasmic segment spans residues 912-951 (CLRKGEKHPREDENLEVQIPLKGKIDLHMRERKPMDISNI).

It is found in the cell membrane. Potential calcium-dependent cell-adhesion protein. The chain is Protocadherin-20 (PCDH20) from Homo sapiens (Human).